We begin with the raw amino-acid sequence, 72 residues long: Translation initiation factor IF-1 (72 aa).

The region spanning 1 to 72 is the S1-like domain; sequence MAKDGVIEVE…NRGRITYRYK (72 aa).

It belongs to the IF-1 family. In terms of assembly, component of the 30S ribosomal translation pre-initiation complex which assembles on the 30S ribosome in the order IF-2 and IF-3, IF-1 and N-formylmethionyl-tRNA(fMet); mRNA recruitment can occur at any time during PIC assembly.

The protein resides in the cytoplasm. In terms of biological role, one of the essential components for the initiation of protein synthesis. Stabilizes the binding of IF-2 and IF-3 on the 30S subunit to which N-formylmethionyl-tRNA(fMet) subsequently binds. Helps modulate mRNA selection, yielding the 30S pre-initiation complex (PIC). Upon addition of the 50S ribosomal subunit IF-1, IF-2 and IF-3 are released leaving the mature 70S translation initiation complex. The protein is Translation initiation factor IF-1 of Bifidobacterium adolescentis (strain ATCC 15703 / DSM 20083 / NCTC 11814 / E194a).